We begin with the raw amino-acid sequence, 327 residues long: Lipoyl synthase (327 aa).

Positions 74, 79, 85, 100, 104, 107, and 314 each coordinate [4Fe-4S] cluster. In terms of domain architecture, Radical SAM core spans 86 to 303 (FSGGTATFMI…AEEGERMGFK (218 aa)).

This sequence belongs to the radical SAM superfamily. Lipoyl synthase family. Requires [4Fe-4S] cluster as cofactor.

The protein resides in the cytoplasm. The catalysed reaction is [[Fe-S] cluster scaffold protein carrying a second [4Fe-4S](2+) cluster] + N(6)-octanoyl-L-lysyl-[protein] + 2 oxidized [2Fe-2S]-[ferredoxin] + 2 S-adenosyl-L-methionine + 4 H(+) = [[Fe-S] cluster scaffold protein] + N(6)-[(R)-dihydrolipoyl]-L-lysyl-[protein] + 4 Fe(3+) + 2 hydrogen sulfide + 2 5'-deoxyadenosine + 2 L-methionine + 2 reduced [2Fe-2S]-[ferredoxin]. It functions in the pathway protein modification; protein lipoylation via endogenous pathway; protein N(6)-(lipoyl)lysine from octanoyl-[acyl-carrier-protein]: step 2/2. In terms of biological role, catalyzes the radical-mediated insertion of two sulfur atoms into the C-6 and C-8 positions of the octanoyl moiety bound to the lipoyl domains of lipoate-dependent enzymes, thereby converting the octanoylated domains into lipoylated derivatives. The polypeptide is Lipoyl synthase (Pseudomonas paraeruginosa (strain DSM 24068 / PA7) (Pseudomonas aeruginosa (strain PA7))).